The primary structure comprises 280 residues: Formamidopyrimidine-DNA glycosylase (280 aa).

Residue P2 is the Schiff-base intermediate with DNA of the active site. The Proton donor role is filled by E3. K58 functions as the Proton donor; for beta-elimination activity in the catalytic mechanism. 3 residues coordinate DNA: H91, R110, and R152. Residues 237–271 (NVYGRENLPCPQCDSAIEKVVLNQRAAYFCSNCQK) form an FPG-type zinc finger. Residue R261 is the Proton donor; for delta-elimination activity of the active site.

Belongs to the FPG family. Monomer. Requires Zn(2+) as cofactor.

It catalyses the reaction Hydrolysis of DNA containing ring-opened 7-methylguanine residues, releasing 2,6-diamino-4-hydroxy-5-(N-methyl)formamidopyrimidine.. The catalysed reaction is 2'-deoxyribonucleotide-(2'-deoxyribose 5'-phosphate)-2'-deoxyribonucleotide-DNA = a 3'-end 2'-deoxyribonucleotide-(2,3-dehydro-2,3-deoxyribose 5'-phosphate)-DNA + a 5'-end 5'-phospho-2'-deoxyribonucleoside-DNA + H(+). In terms of biological role, involved in base excision repair of DNA damaged by oxidation or by mutagenic agents. Acts as a DNA glycosylase that recognizes and removes damaged bases. Has a preference for oxidized purines, such as 7,8-dihydro-8-oxoguanine (8-oxoG). Has AP (apurinic/apyrimidinic) lyase activity and introduces nicks in the DNA strand. Cleaves the DNA backbone by beta-delta elimination to generate a single-strand break at the site of the removed base with both 3'- and 5'-phosphates. In Hydrogenovibrio crunogenus (strain DSM 25203 / XCL-2) (Thiomicrospira crunogena), this protein is Formamidopyrimidine-DNA glycosylase.